The chain runs to 419 residues: Tyrosine--tRNA ligase (419 aa).

L-tyrosine is bound at residue tyrosine 34. The 'HIGH' region signature appears at 39 to 48 (PTADSLHLGN). 2 residues coordinate L-tyrosine: tyrosine 169 and glutamine 173. Residues 229 to 233 (KFGKS) carry the 'KMSKS' region motif. Lysine 232 is an ATP binding site. The S4 RNA-binding domain occupies 353 to 419 (LTLIELLISV…GKKKNFVLTY (67 aa)).

The protein belongs to the class-I aminoacyl-tRNA synthetase family. TyrS type 1 subfamily. In terms of assembly, homodimer.

Its subcellular location is the cytoplasm. The enzyme catalyses tRNA(Tyr) + L-tyrosine + ATP = L-tyrosyl-tRNA(Tyr) + AMP + diphosphate + H(+). Its function is as follows. Catalyzes the attachment of tyrosine to tRNA(Tyr) in a two-step reaction: tyrosine is first activated by ATP to form Tyr-AMP and then transferred to the acceptor end of tRNA(Tyr). The chain is Tyrosine--tRNA ligase from Lactococcus lactis subsp. cremoris (strain MG1363).